A 713-amino-acid polypeptide reads, in one-letter code: uncharacterized protein (713 aa).

The helical transmembrane segment at 686-706 (VWKFNPALYSTITNIFLLIIF) threads the bilayer.

The protein belongs to the plectrovirus ORF1 family.

It localises to the host membrane. This is an uncharacterized protein from Spiroplasma melliferum (SpV1).